The sequence spans 410 residues: Regulator of microtubule dynamics protein 2 (410 aa).

A helical transmembrane segment spans residues Leu9–His28. Phosphoserine is present on Ser51. Residues Gln69–Glu110 are a coiled coil. Residues Ile120–Gly151 form a disordered region. Ser121 is subject to Phosphoserine. Positions Ser121 to Gly131 are enriched in basic residues. Thr139 is modified (phosphothreonine). Tyr152 is subject to Phosphotyrosine. Phosphothreonine is present on residues Thr154 and Thr157.

This sequence belongs to the RMDN family. Interacts with microtubules.

It is found in the membrane. The protein resides in the cytoplasm. Its subcellular location is the cytoskeleton. The protein localises to the spindle. It localises to the spindle pole. In Mus musculus (Mouse), this protein is Regulator of microtubule dynamics protein 2 (Rmdn2).